Here is a 560-residue protein sequence, read N- to C-terminus: Digoxin reductase (560 aa).

The tat-type signal signal peptide spans 1–48; that stretch reads MEYGKCRGIERGMGRRDFLKAATLLGATAAGAGMLAGCAPKSASEAQA.

It belongs to the FAD-dependent oxidoreductase 2 family. May form a membrane-associated complex with Cgr1. It depends on FAD as a cofactor. The cofactor is [4Fe-4S] cluster. Predicted to be exported by the Tat system. The position of the signal peptide cleavage has not been experimentally proven.

Its subcellular location is the cell membrane. It catalyses the reaction digoxin + 2 Fe(II)-[cytochrome c] + 3 H(+) = dihydrodigoxin + 2 Fe(III)-[cytochrome c]. The catalysed reaction is digitoxin + 2 Fe(II)-[cytochrome c] + 3 H(+) = dihydrodigitoxin + 2 Fe(III)-[cytochrome c]. The enzyme catalyses digoxigenin + 2 Fe(II)-[cytochrome c] + 3 H(+) = dihydrodigoxigenin + 2 Fe(III)-[cytochrome c]. It carries out the reaction ouabain + 2 Fe(II)-[cytochrome c] + 3 H(+) = dihydroouabain + 2 Fe(III)-[cytochrome c]. It catalyses the reaction ouabagenin + 2 Fe(II)-[cytochrome c] + 3 H(+) = dihydroouabagenin + 2 Fe(III)-[cytochrome c]. In terms of biological role, involved in the inactivation of the cardiac medication and plant natural product digoxin, thus decreasing drug efficacy and toxicity. Catalyzes the reduction of the alpha,beta-unsaturated butyrolactone ring of digoxin to the inactive metabolite dihydrodigoxin. Likely uses the cytochrome Cgr1 as the physiological electron donor, encoded by the adjacent gene in the locus. Only reduces digoxin and other cardenolide toxins, such as digitoxin, digoxigenin, ouabain and ouabagenin. Therefore is a specialized enzyme present in some gut bacteria E.lenta that protects their human host against ingested plant toxins. The protein is Digoxin reductase of Eggerthella lenta (strain ATCC 25559 / DSM 2243 / CCUG 17323 / JCM 9979 / KCTC 3265 / NCTC 11813 / VPI 0255 / 1899 B) (Eubacterium lentum).